Consider the following 1184-residue polypeptide: uncharacterized protein (1184 aa).

2 disordered regions span residues 115–152 and 397–426; these read ETSSQPSQEVYHPHAGKAAQSAHVMNSTESRPSSAHVS and TYKPKSSVNGSVYRSKSVKSTTSHNKVPER. 2 stretches are compositionally biased toward polar residues: residues 137–152 and 397–421; these read HVMNSTESRPSSAHVS and TYKPKSSVNGSVYRSKSVKSTTSHN. S686 bears the Phosphoserine mark. Basic and acidic residues-rich tracts occupy residues 705 to 767, 783 to 792, 849 to 863, and 891 to 902; these read LSER…ESAH, FEHETEPSHY, SHAHDNAVNEKRDLG, and YLHDEKTRDTLT. 2 disordered regions span residues 705–870 and 890–1017; these read LSER…FGDV and DYLH…SSPK. S905 is subject to Phosphoserine. Residues 920-932 are compositionally biased toward basic and acidic residues; it reads EDHPHASEAERAH. The span at 941–950 shows a compositional bias: low complexity; that stretch reads SSESSPESQS. Over residues 999 to 1011 the composition is skewed to basic and acidic residues; that stretch reads PRERLDDNAKEIL. The residue at position 1018 (S1018) is a Phosphoserine. Disordered stretches follow at residues 1029 to 1107 and 1135 to 1154; these read NRKD…IGTQ and DVDNVVSGHSNVNGVSKSRP. The segment covering 1032–1045 has biased composition (basic and acidic residues); the sequence is DKAAVKRMLEEDSS. Positions 1073–1107 are enriched in polar residues; sequence PAVNNSTKPVAVTSKNGHSRNGSHAAHSNNVIGTQ. A compositionally biased stretch (low complexity) spans 1138-1150; the sequence is NVVSGHSNVNGVS.

It localises to the cytoplasm. This is an uncharacterized protein from Schizosaccharomyces pombe (strain 972 / ATCC 24843) (Fission yeast).